A 266-amino-acid polypeptide reads, in one-letter code: Regulatory protein RecX (266 aa).

It belongs to the RecX family.

It is found in the cytoplasm. Modulates RecA activity. The protein is Regulatory protein RecX of Enterococcus faecalis (strain ATCC 700802 / V583).